The chain runs to 171 residues: Myosin regulatory light chain 12B (171 aa).

The residue at position 18 (Thr18) is a Phosphothreonine; by MLCK and ZIPK/DAPK3. Ser19 carries the phosphoserine; by MLCK and ZIPK/DAPK3 modification. EF-hand domains follow at residues 28-63, 97-132, and 133-168; these read SQIQEFKEAFNMIDQNRDGFIDKEDLHDMLASLGKN, DPEDVIRNAFACFDEEATGTIQEDYLRELLTTMGDR, and FTDEEVDELYREAPIDKKGNFNYIEFTRILKHGAKD. Residues Asp41, Asn43, Asp45, and Asp52 each contribute to the Ca(2+) site.

In terms of assembly, myosin is a hexamer of 2 heavy chains and 4 light chains: interacts with myosin heavy chain MYO19. In terms of processing, phosphorylation increases the actin-activated myosin ATPase activity and thereby regulates the contractile activity. It is required to generate the driving force in the migration of the cells but not necessary for localization of myosin-2 at the leading edge. Phosphorylation is reduced following epigallocatechin-3-O-gallate treatment.

Its function is as follows. Myosin regulatory subunit that plays an important role in regulation of both smooth muscle and nonmuscle cell contractile activity via its phosphorylation. Phosphorylation triggers actin polymerization in vascular smooth muscle. Implicated in cytokinesis, receptor capping, and cell locomotion. The chain is Myosin regulatory light chain 12B (MYL12B) from Bos taurus (Bovine).